We begin with the raw amino-acid sequence, 426 residues long: MKHLTEMVRQHKAGKTNGIYAVCSAHPLVLEAAIRYASANQTPLLIEATSNQVDQFGGYTGMTPADFRGFVCQLADSLNFPQDALILGGDHLGPNRWQNLPAAQAMANADDLIKSYVAAGFKKIHLDCSMSCQDDPIPLTDDIVAERAARLAKVAEETCREHFGEADLEYVIGTEVPVPGGAHETLSELAVTTPDAARATLEAHRHAFEKQGLNAIWPRIIALVVQPGVEFDHTNVIDYQPAKASALSQMVENYETLIFEAHSTDYQTPQSLRQLVIDHFAILKVGPALTFSLREALFSLAAIEEELVPAKACSGLRQVLEDVMLDRPEYWQSHYHGDGNARRLARGYSYSDRVRYYWPDSQIDDAFAHLVRNLADSPIPLPLISQYLPLQYVKVRSGELQPTPRELIINHIQDILAQYHTACEGQ.

It belongs to the GatZ/KbaZ family. KbaZ subfamily. In terms of assembly, forms a complex with KbaY.

Its pathway is carbohydrate metabolism; D-tagatose 6-phosphate degradation; D-glyceraldehyde 3-phosphate and glycerone phosphate from D-tagatose 6-phosphate: step 2/2. Its function is as follows. Component of the tagatose-1,6-bisphosphate aldolase KbaYZ that is required for full activity and stability of the Y subunit. Could have a chaperone-like function for the proper and stable folding of KbaY. When expressed alone, KbaZ does not show any aldolase activity. The sequence is that of D-tagatose-1,6-bisphosphate aldolase subunit KbaZ from Escherichia coli O8 (strain IAI1).